A 159-amino-acid chain; its full sequence is 2-C-methyl-D-erythritol 2,4-cyclodiphosphate synthase (159 aa).

D8 and H10 together coordinate a divalent metal cation. 4-CDP-2-C-methyl-D-erythritol 2-phosphate is bound by residues 8 to 10 and 34 to 35; these read DVH and HS. Residue H42 participates in a divalent metal cation binding. 4-CDP-2-C-methyl-D-erythritol 2-phosphate-binding positions include 56–58, 61–65, 100–106, 132–135, F139, and R142; these read DIG, FPDTD, AQAPKML, and TTTE.

The protein belongs to the IspF family. In terms of assembly, homotrimer. It depends on a divalent metal cation as a cofactor.

The catalysed reaction is 4-CDP-2-C-methyl-D-erythritol 2-phosphate = 2-C-methyl-D-erythritol 2,4-cyclic diphosphate + CMP. Its pathway is isoprenoid biosynthesis; isopentenyl diphosphate biosynthesis via DXP pathway; isopentenyl diphosphate from 1-deoxy-D-xylulose 5-phosphate: step 4/6. Its function is as follows. Involved in the biosynthesis of isopentenyl diphosphate (IPP) and dimethylallyl diphosphate (DMAPP), two major building blocks of isoprenoid compounds. Catalyzes the conversion of 4-diphosphocytidyl-2-C-methyl-D-erythritol 2-phosphate (CDP-ME2P) to 2-C-methyl-D-erythritol 2,4-cyclodiphosphate (ME-CPP) with a corresponding release of cytidine 5-monophosphate (CMP). This is 2-C-methyl-D-erythritol 2,4-cyclodiphosphate synthase from Salmonella typhimurium (strain LT2 / SGSC1412 / ATCC 700720).